The following is a 304-amino-acid chain: KIN17-like protein (304 aa).

The C2H2-type zinc finger occupies 26–50 (WYCSACQKQMRDENGFKCHTQSEGH). Disordered stretches follow at residues 204–228 (IDLS…SAQN) and 261–291 (LNKS…DIIA).

Belongs to the KIN17 family.

The protein localises to the nucleus. The protein resides in the nucleolus. This is KIN17-like protein from Schizosaccharomyces pombe (strain 972 / ATCC 24843) (Fission yeast).